Reading from the N-terminus, the 532-residue chain is CTP synthase (532 aa).

The interval Met-1–Leu-267 is amidoligase domain. Ser-13 contacts CTP. Ser-13 serves as a coordination point for UTP. Ser-14–Ile-19 is an ATP binding site. Tyr-54 is an L-glutamine binding site. Residue Asp-71 coordinates ATP. The Mg(2+) site is built by Asp-71 and Glu-141. CTP contacts are provided by residues Asp-148–Glu-150, Lys-188–Gln-193, and Lys-224. Residues Lys-188 to Gln-193 and Lys-224 contribute to the UTP site. A Glutamine amidotransferase type-1 domain is found at Arg-292–Lys-532. Gly-354 lines the L-glutamine pocket. The active-site Nucleophile; for glutamine hydrolysis is Cys-381. Residues Leu-382 to Gln-385, Glu-405, and Arg-462 contribute to the L-glutamine site. Active-site residues include His-507 and Glu-509.

It belongs to the CTP synthase family. In terms of assembly, homotetramer.

It catalyses the reaction UTP + L-glutamine + ATP + H2O = CTP + L-glutamate + ADP + phosphate + 2 H(+). The enzyme catalyses L-glutamine + H2O = L-glutamate + NH4(+). It carries out the reaction UTP + NH4(+) + ATP = CTP + ADP + phosphate + 2 H(+). It participates in pyrimidine metabolism; CTP biosynthesis via de novo pathway; CTP from UDP: step 2/2. Its activity is regulated as follows. Allosterically activated by GTP, when glutamine is the substrate; GTP has no effect on the reaction when ammonia is the substrate. The allosteric effector GTP functions by stabilizing the protein conformation that binds the tetrahedral intermediate(s) formed during glutamine hydrolysis. Inhibited by the product CTP, via allosteric rather than competitive inhibition. Catalyzes the ATP-dependent amination of UTP to CTP with either L-glutamine or ammonia as the source of nitrogen. Regulates intracellular CTP levels through interactions with the four ribonucleotide triphosphates. The sequence is that of CTP synthase from Listeria monocytogenes serovar 1/2a (strain ATCC BAA-679 / EGD-e).